The primary structure comprises 123 residues: Small ribosomal subunit protein uS12cz/uS12cy (123 aa).

The protein belongs to the universal ribosomal protein uS12 family. In terms of assembly, part of the 30S ribosomal subunit.

Its subcellular location is the plastid. It localises to the chloroplast. With S4 and S5 plays an important role in translational accuracy. Located at the interface of the 30S and 50S subunits. This chain is Small ribosomal subunit protein uS12cz/uS12cy (rps12-A), found in Populus alba (White poplar).